Consider the following 1186-residue polypeptide: Syntaxin-binding protein 5-like (1186 aa).

N-acetylmethionine is present on M1. The segment at 15-40 (ASSPGSGSSSGSNSGGGAGSGSVHPA) is disordered. Residues 16-26 (SSPGSGSSSGS) show a composition bias toward low complexity. WD repeat units lie at residues 74–107 (TALA…CYCQ), 114–153 (VLQL…SLKF), 158–194 (ITYC…GYVI), 213–247 (HLSD…ELRV), 253–285 (IHSI…PSRP), 307–349 (PILK…KAIT), 357–391 (IVEF…VVDL), 413–490 (TCTA…YKLK), 518–629 (QMIY…ELVI), and 643–705 (TSLA…IADN). A Phosphothreonine modification is found at T568. Residues S574, S589, and S593 each carry the phosphoserine modification. At T596 the chain carries Phosphothreonine. A Phosphoserine modification is found at S599. At R709 the chain carries Omega-N-methylarginine. Polar residues predominate over residues 748-769 (TSDHVNGHCTSPTSQSCSSGKR). The interval 748–771 (TSDHVNGHCTSPTSQSCSSGKRLS) is disordered. S763, S765, S766, S771, S772, S793, S800, S812, S820, S822, and S823 each carry phosphoserine. WD repeat units lie at residues 832-889 (ITAL…SGTF), 898-969 (TFSC…QTCL), 974-1018 (ITET…LDVN), and 1032-1055 (CFTN…TYSQ). T1093 carries the phosphothreonine modification. Residues 1121-1181 (SIEGMKGAAG…HELMLKYKDK (61 aa)) enclose the v-SNARE coiled-coil homology domain.

The protein belongs to the WD repeat L(2)GL family. In terms of assembly, interacts with STX1A and STX4. Post-translationally, phosphorylated, leading to STXBP5L increased turnover and subsequent de-repression of insulin secretion. Phosphorylated on serine residues in response to glucose or phorbol esters. In terms of processing, ubiquitinated by the E3 ligase SYVN1, leading to STXBP5L proteasomal degradation. As to expression, detected in kidney, hippocampus and lung carcinoma.

The protein localises to the cytoplasm. It is found in the cell membrane. It localises to the membrane. In terms of biological role, plays a role in vesicle trafficking and exocytosis inhibition. In pancreatic beta-cells, inhibits insulin secretion probably by interacting with and regulating STX1A and STX4, key t-SNARE proteins involved in the fusion of insulin granules to the plasma membrane. Also plays a role in neurotransmitter release by inhibiting basal acetylcholine release from axon terminals and by preventing synaptic fatigue upon repetitive stimulation. Promotes as well axonal outgrowth. The polypeptide is Syntaxin-binding protein 5-like (STXBP5L) (Homo sapiens (Human)).